The sequence spans 431 residues: uncharacterized protein (431 aa).

One can recognise a Peptidase S8 domain in the interval 1-258 (MPSQMREAIT…HGLIDLERAG (258 aa)).

Belongs to the peptidase S8 family.

This is an uncharacterized protein from Sinorhizobium fredii (strain NBRC 101917 / NGR234).